The primary structure comprises 90 residues: Acylphosphatase (90 aa).

Residues 3–90 (QYHMIADGRV…KGYRTFSISY (88 aa)) enclose the Acylphosphatase-like domain. Catalysis depends on residues Arg18 and Asn36.

This sequence belongs to the acylphosphatase family.

It catalyses the reaction an acyl phosphate + H2O = a carboxylate + phosphate + H(+). The protein is Acylphosphatase (acyP) of Bacillus velezensis (strain DSM 23117 / BGSC 10A6 / LMG 26770 / FZB42) (Bacillus amyloliquefaciens subsp. plantarum).